Reading from the N-terminus, the 294-residue chain is MSFPEGKDILLMGNEAAKAAEAFQRSLKKIGHRRTQSIVGDKIITVSETVEKPTISKSTKVTTPPERRNAWGEKPDTTRNQTEEARNEATLEDTSRLYEEVFAPTSDGKTPAEEGMETPEKPKKKVTFKNDESGRYTKLEMEALELLSDNEDDDAESSVLTFEEKDTSALSLEARLESIDEKLSMILGLLRTLNVATAGPTAARDGIRDAMVGLREELIADIIKEAKGKAAEMMKEEAKQKSKIGNGSVGLTEKAKELNKIVEDESTSGESEEEEEEEDEEESNPDDDLYSLTM.

The binding to monomeric RNA-free nucleoprotein stretch occupies residues 12–28; the sequence is MGNEAAKAAEAFQRSLK. Residues 52-97 are disordered; sequence KPTISKSTKVTTPPERRNAWGEKPDTTRNQTEEARNEATLEDTSRL. A compositionally biased stretch (basic and acidic residues) spans 65–97; sequence PERRNAWGEKPDTTRNQTEEARNEATLEDTSRL. Phosphoserine is present on Ser106. The interval 123–128 is binding to host phosphatase PP1; it reads KKKVTF. The segment at 135-157 is binding to protein M2-1; it reads RYTKLEMEALELLSDNEDDDAES. Phosphoserine is present on residues Ser148, Ser157, Ser158, Ser168, and Ser171. The segment at 169-194 is oligomerization and binding to RNA-directed RNA polymerase L; it reads ALSLEARLESIDEKLSMILGLLRTLN. The tract at residues 234–294 is disordered; it reads MKEEAKQKSK…PDDDLYSLTM (61 aa). The segment at 251–279 is binding to RNA-directed RNA polymerase L; that stretch reads LTEKAKELNKIVEDESTSGESEEEEEEED. Basic and acidic residues predominate over residues 253-263; sequence EKAKELNKIVE. Acidic residues predominate over residues 264–294; that stretch reads DESTSGESEEEEEEEDEEESNPDDDLYSLTM. The interval 281 to 294 is binding to the N-RNA complex; sequence EESNPDDDLYSLTM.

The protein belongs to the pneumoviridae phosphoprotein P family. As to quaternary structure, homotetramer. Interacts with protein M2-1; the interaction between the two tetramers is required for the anti-termination and elongation transcriptional activities of protein M2-1. Interacts with host phosphatase PP1; this interaction recruits PP1 to the inclusion bodies. Formation of a complex PP1/M2-1/P allows P to target host PP1 phosphatase to the M2-1 substrate. Interacts with the nucleoprotein N; the phosphorylated phosphoprotein P binds to N-RNA complex. Interacts with the monomeric RNA-free nucleoprotein N. Interacts with RNA-directed RNA polymerase L (via N-terminus); the association of P and L forms the polymerase complex. Post-translationally, constitutively phosphorylated by host.

The protein resides in the virion. The protein localises to the host cytoplasm. In terms of biological role, plays critical roles in regulating RNA replication and transcription through its interactions with multiple proteins. Tethers the RNA-directed RNA polymerase L to the nucleoprotein-RNA complex. Recruits the M2-1 protein, a processivity factor that is required for efficient transcription of viral RNA. Acts as a chaperone for neo-synthesized nucleoprotein by forming an N-P complex that preserves N in a monomeric and RNA-free state and prevents the association of nascent N with host cell RNAs. Recruits the host phosphatase PP1 to inclusion bodies to regulate viral transcription. In Avian metapneumovirus (isolate Canada goose/Minnesota/15a/2001) (AMPV), this protein is Phosphoprotein.